Consider the following 155-residue polypeptide: Protein-export protein SecB (155 aa).

This sequence belongs to the SecB family. In terms of assembly, homotetramer, a dimer of dimers. One homotetramer interacts with 1 SecA dimer.

The protein localises to the cytoplasm. Its function is as follows. One of the proteins required for the normal export of preproteins out of the cell cytoplasm. It is a molecular chaperone that binds to a subset of precursor proteins, maintaining them in a translocation-competent state. It also specifically binds to its receptor SecA. The polypeptide is Protein-export protein SecB (Albidiferax ferrireducens (strain ATCC BAA-621 / DSM 15236 / T118) (Rhodoferax ferrireducens)).